A 307-amino-acid chain; its full sequence is Cilia-and flagella-associated protein 96 (307 aa).

Disordered stretches follow at residues 73–102 (YSDP…SSGE) and 218–279 (HSQK…GPKT).

It belongs to the CFAP96 family.

The protein localises to the cytoplasm. It is found in the cytoskeleton. The protein resides in the microtubule organizing center. It localises to the centrosome. The sequence is that of Cilia-and flagella-associated protein 96 (cfap96.L) from Xenopus laevis (African clawed frog).